Reading from the N-terminus, the 599-residue chain is Protein ref(2)P (599 aa).

Positions 3-88 (EKLLKITYQG…CESNMHVQVA (86 aa)) constitute a PB1 domain. The segment at 122–173 (HDSVQCDGCGLAPLIGFRYKCVQCSNFDLCQKCESAHKHPEHLMLRMPTNNG) adopts a ZZ-type zinc-finger fold. Residues cysteine 127, cysteine 130, cysteine 142, cysteine 145, cysteine 151, cysteine 154, histidine 160, and histidine 163 each contribute to the Zn(2+) site. Disordered stretches follow at residues 192–225 (RRSRGHCPFQEASQPAPAAEPARDSRRERRHARR), 245–319 (TTAT…INLD), 357–453 (GIFA…LDPE), and 507–544 (ASANTQTAQVDTVSTSTSTTSVTTNSVGTSPAAPDDKR). Low complexity predominate over residues 199–211 (PFQEASQPAPAAE). A compositionally biased stretch (basic and acidic residues) spans 276–286 (KATESEAKPTE). Polar residues predominate over residues 291–319 (NTDQSVPTTEDPVTTPRSTEPTTPVINLD). A compositionally biased stretch (low complexity) spans 375-411 (QSQSSGQSAASSASQSAVPSAAPSANQSNVPSANQSA). Tandem repeats lie at residues 386 to 393 (SASQSAVP), 399 to 406 (ANQSNVPS), and 407 to 413 (ANQSATP). Residues 386–413 (SASQSAVPSAAPSANQSNVPSANQSATP) form a 3 X 8 AA repeats of S-A-N-Q-S-X-X-P region. Residues 412-423 (TPSISGSISDAQ) are compositionally biased toward polar residues. Positions 511–536 (TQTAQVDTVSTSTSTTSVTTNSVGTS) are enriched in low complexity. In terms of domain architecture, UBA spans 550-595 (HTDERINQSIHAMMAMGFSNEGAWLTQLLESVQGNIPAALDVMHVS).

In terms of assembly, interacts with aPKC and Traf6.

The protein localises to the nucleus. Its subcellular location is the cytoplasm. Required for selective autophagy activation by ubiquitinated proteins. Implicated in sigma rhabdovirus multiplication and necessary for male fertility. Involved in activating transcription of Drs. The polypeptide is Protein ref(2)P (ref(2)P) (Drosophila simulans (Fruit fly)).